The following is a 267-amino-acid chain: GTP cyclohydrolase FolE2 2 (267 aa).

This sequence belongs to the GTP cyclohydrolase IV family.

It carries out the reaction GTP + H2O = 7,8-dihydroneopterin 3'-triphosphate + formate + H(+). The protein operates within cofactor biosynthesis; 7,8-dihydroneopterin triphosphate biosynthesis; 7,8-dihydroneopterin triphosphate from GTP: step 1/1. Functionally, converts GTP to 7,8-dihydroneopterin triphosphate. This Cupriavidus metallidurans (strain ATCC 43123 / DSM 2839 / NBRC 102507 / CH34) (Ralstonia metallidurans) protein is GTP cyclohydrolase FolE2 2.